Here is a 131-residue protein sequence, read N- to C-terminus: Large ribosomal subunit protein bL19c (131 aa).

It belongs to the bacterial ribosomal protein bL19 family.

Its subcellular location is the plastid. It is found in the cyanelle. Its function is as follows. This protein is located at the 30S-50S ribosomal subunit interface and may play a role in the structure and function of the aminoacyl-tRNA binding site. The chain is Large ribosomal subunit protein bL19c (rpl19) from Cyanophora paradoxa.